We begin with the raw amino-acid sequence, 71 residues long: Ceratotoxin-A (71 aa).

The first 23 residues, 1 to 23, serve as a signal peptide directing secretion; sequence MANLKAVFLICIVAFIAFQCVVA. 2 consecutive propeptides follow at residues 24-35 and 65-71; these read EPAAEDSIVVKR and VAAGLVG.

In terms of assembly, homomer of four to six subunits.

It is found in the secreted. Its function is as follows. Female-specific peptides with potent activity against Gram-positive and Gram-negative bacteria. They have as well hemolytic activity. The sequence is that of Ceratotoxin-A (CTXA2) from Ceratitis capitata (Mediterranean fruit fly).